The primary structure comprises 158 residues: SsrA-binding protein (158 aa).

It belongs to the SmpB family.

It is found in the cytoplasm. Its function is as follows. Required for rescue of stalled ribosomes mediated by trans-translation. Binds to transfer-messenger RNA (tmRNA), required for stable association of tmRNA with ribosomes. tmRNA and SmpB together mimic tRNA shape, replacing the anticodon stem-loop with SmpB. tmRNA is encoded by the ssrA gene; the 2 termini fold to resemble tRNA(Ala) and it encodes a 'tag peptide', a short internal open reading frame. During trans-translation Ala-aminoacylated tmRNA acts like a tRNA, entering the A-site of stalled ribosomes, displacing the stalled mRNA. The ribosome then switches to translate the ORF on the tmRNA; the nascent peptide is terminated with the 'tag peptide' encoded by the tmRNA and targeted for degradation. The ribosome is freed to recommence translation, which seems to be the essential function of trans-translation. The chain is SsrA-binding protein from Bartonella quintana (strain Toulouse) (Rochalimaea quintana).